Consider the following 309-residue polypeptide: Olfactory receptor-like protein OLF4 (309 aa).

Topologically, residues 1–25 (MELENDTRIPEFLLLGFSEEPKLQP) are extracellular. N5 carries an N-linked (GlcNAc...) asparagine glycan. Residues 26–49 (FLFGLFLSMYLVTILGNLLLILAV) form a helical membrane-spanning segment. Topologically, residues 50–57 (SSDSHLHT) are cytoplasmic. Residues 58–79 (PMYFFLANLSFVDICFTCTTIP) traverse the membrane as a helical segment. Residues 80–100 (KMLVNIQTQRKVITYESCIIQ) are Extracellular-facing. Residues 101-120 (MYFFELFAGIDNFLLTVMAY) form a helical membrane-spanning segment. At 121–139 (DRYMAICYPLHYMVIMNPQ) the chain is on the cytoplasmic side. A helical membrane pass occupies residues 140–158 (LCSLLLLVSWIMSALHSLL). Residues 159–196 (QTLMVLRLSFCTHFQIPHFFCELNQMIQLACSDTFLNN) are Extracellular-facing. The helical transmembrane segment at 197–219 (MMLYFAAILLGVAPLVGVLYSYF) threads the bilayer. Residues 220 to 236 (KIVSSIRGISSAHSKYK) are Cytoplasmic-facing. The chain crosses the membrane as a helical span at residues 237–260 (AFSTCASHLSVVSLFYCTSLGVYL). The Extracellular portion of the chain corresponds to 261-272 (SSAAPQSTHTSS). A helical membrane pass occupies residues 273–292 (VASVMYTVVTPMLNPFIYSL). Residues 293–309 (RNKDIKGALNVFFRGKP) are Cytoplasmic-facing.

It belongs to the G-protein coupled receptor 1 family.

The protein resides in the cell membrane. Functionally, putative odorant or sperm cell receptor. The chain is Olfactory receptor-like protein OLF4 from Canis lupus familiaris (Dog).